Here is a 114-residue protein sequence, read N- to C-terminus: uncharacterized protein (114 aa).

This sequence to E.coli YfiI and P.aeruginosa RluD.

This is an uncharacterized protein from Escherichia coli O6:H1 (strain CFT073 / ATCC 700928 / UPEC).